The sequence spans 530 residues: UPF0422 protein lpp3030 (530 aa).

A signal peptide spans 1 to 19 (MKFKKIILALACLSSPLYA). Positions 20–66 (DQDQQLKSEIQRLQHQAEDLQAQLNRLQKQLANHKSSQQKHEQQAAA) form a coiled coil. Residues 50–81 (LANHKSSQQKHEQQAAAKPAEPKSKPTTKSGA) form a disordered region. Low complexity predominate over residues 63 to 79 (QAAAKPAEPKSKPTTKS).

Belongs to the UPF0422 family.

The sequence is that of UPF0422 protein lpp3030 from Legionella pneumophila (strain Paris).